Here is a 332-residue protein sequence, read N- to C-terminus: tRNA-dihydrouridine synthase B (332 aa).

Residues 19–21 (PMA) and Q73 contribute to the FMN site. C103 serves as the catalytic Proton donor. Residues K142, 203–205 (NGD), and 227–228 (GR) contribute to the FMN site.

The protein belongs to the Dus family. DusB subfamily. It depends on FMN as a cofactor.

It catalyses the reaction a 5,6-dihydrouridine in tRNA + NAD(+) = a uridine in tRNA + NADH + H(+). It carries out the reaction a 5,6-dihydrouridine in tRNA + NADP(+) = a uridine in tRNA + NADPH + H(+). Functionally, catalyzes the synthesis of 5,6-dihydrouridine (D), a modified base found in the D-loop of most tRNAs, via the reduction of the C5-C6 double bond in target uridines. The chain is tRNA-dihydrouridine synthase B from Pseudomonas aeruginosa (strain ATCC 15692 / DSM 22644 / CIP 104116 / JCM 14847 / LMG 12228 / 1C / PRS 101 / PAO1).